An 801-amino-acid chain; its full sequence is Phenylalanine--tRNA ligase beta subunit (801 aa).

The region spanning 39-153 is the tRNA-binding domain; that stretch reads ADGLSKLVVG…EEAVPGDAIF (115 aa). A B5 domain is found at 406–481; sequence TEPVEVSTSL…RIYGYDKLPT (76 aa). Residues D459, D465, E468, and E469 each contribute to the Mg(2+) site. The FDX-ACB domain maps to 708–801; sequence TKFPAMTRDV…LTEQVGAEVR (94 aa).

It belongs to the phenylalanyl-tRNA synthetase beta subunit family. Type 1 subfamily. As to quaternary structure, tetramer of two alpha and two beta subunits. Requires Mg(2+) as cofactor.

Its subcellular location is the cytoplasm. It catalyses the reaction tRNA(Phe) + L-phenylalanine + ATP = L-phenylalanyl-tRNA(Phe) + AMP + diphosphate + H(+). The chain is Phenylalanine--tRNA ligase beta subunit from Streptococcus pyogenes serotype M1.